The primary structure comprises 291 residues: ATP synthase gamma chain (291 aa).

It belongs to the ATPase gamma chain family. In terms of assembly, F-type ATPases have 2 components, CF(1) - the catalytic core - and CF(0) - the membrane proton channel. CF(1) has five subunits: alpha(3), beta(3), gamma(1), delta(1), epsilon(1). CF(0) has three main subunits: a, b and c.

It is found in the cell inner membrane. Produces ATP from ADP in the presence of a proton gradient across the membrane. The gamma chain is believed to be important in regulating ATPase activity and the flow of protons through the CF(0) complex. This is ATP synthase gamma chain from Verminephrobacter eiseniae (strain EF01-2).